The sequence spans 2648 residues: E3 ubiquitin-protein ligase hecd-1 (2648 aa).

ANK repeat units follow at residues 374–403 (VGQSLTNWASAFGSIEMVQYLCDKGSDVNK) and 405–434 (HKSSSLHYAACFGRPDVVKLLLQRGANPDL). Basic and acidic residues predominate over residues 433–455 (DLRDEDGKTALDKARERSDDDHN). 3 disordered regions span residues 433–494 (DLRD…ELPN), 645–714 (PMEI…KATA), and 1376–1400 (DPPKKDSPAGTSSTPGSSSSAALPP). Polar residues-rich tracts occupy residues 478–489 (ASTSKQPGTSTK), 652–661 (NQPSSSTAVP), and 670–688 (TVPSSSGGADAESNSNPST). Low complexity-rich tracts occupy residues 696-714 (SSTPSSSTQQSISKPKATA) and 1383-1400 (PAGTSSTPGSSSSAALPP). One can recognise an MIB/HERC2 domain in the interval 1438–1510 (RSRGSYKISE…NFDIERVTST (73 aa)). Disordered stretches follow at residues 1538-1562 (YTPKTTGGPPSSSVFGTSSSAGSSR), 1575-1629 (KNTT…SLQH), 1652-1796 (NQEP…LLGG), and 1811-1836 (ESLSDASSSAKDATTNEAQKKGGKKP). Composition is skewed to low complexity over residues 1543 to 1562 (TGGPPSSSVFGTSSSAGSSR) and 1575 to 1586 (KNTTPAGTPSSG). A compositionally biased stretch (polar residues) spans 1610 to 1629 (TSGPSVASTGQAASAESLQH). Residues 1653–1666 (QEPEDEPMGGEESD) show a composition bias toward acidic residues. Positions 1667 to 1696 (SAASMRSAASSNSQMSMGSSSQQQQQQDSD) are enriched in low complexity. Acidic residues-rich tracts occupy residues 1736-1746 (TDGDADADETN) and 1756-1783 (DAMEEDDEEEETMEDEEDDDDDDDDESS). Over residues 1812 to 1823 (SLSDASSSAKDA) the composition is skewed to low complexity. The region spanning 2240-2648 (FHADRKAVLE…AINEKGFHLN (409 aa)) is the HECT domain. Catalysis depends on Cys2617, which acts as the Glycyl thioester intermediate.

It belongs to the UPL family. K-HECT subfamily. As to expression, expressed in most tissues, including hypodermis, muscle, intestine, vulva, and neurons.

It catalyses the reaction S-ubiquitinyl-[E2 ubiquitin-conjugating enzyme]-L-cysteine + [acceptor protein]-L-lysine = [E2 ubiquitin-conjugating enzyme]-L-cysteine + N(6)-ubiquitinyl-[acceptor protein]-L-lysine.. Its pathway is protein modification; protein ubiquitination. Its function is as follows. E3 ubiquitin-protein ligase which accepts ubiquitin from an E2 ubiquitin-conjugating enzyme in the form of a thioester and then directly transfers the ubiquitin to targeted substrates. Involved in the ubiquitination and proteasomal-mediated degradation of cytoplasmic and mitochondrial proteins. Positively regulates lin-12 activity in the anchor cell (AC)/vulval precursor (VU) cell fate decision. Negatively regulates glp-1 activity in germline proliferation. May play a role in the formation of fibrous organelles, a hemidesmosome-like structure attaching muscles to the epidermis. Regulates germline DNA double-strand-break repair and apoptosis in response to DNA damage by recruiting E4 ubiquitin-protein ligase ufd-2 to DNA repair foci. In Caenorhabditis elegans, this protein is E3 ubiquitin-protein ligase hecd-1.